The following is a 370-amino-acid chain: tRNA N6-adenosine threonylcarbamoyltransferase (370 aa).

His122 and His126 together coordinate Fe cation. Residues 153 to 157 (LLSGG), Asp186, Gly199, and Asn298 each bind substrate. Fe cation is bound at residue Asp326.

It belongs to the KAE1 / TsaD family. Fe(2+) serves as cofactor.

The protein resides in the cytoplasm. The catalysed reaction is L-threonylcarbamoyladenylate + adenosine(37) in tRNA = N(6)-L-threonylcarbamoyladenosine(37) in tRNA + AMP + H(+). In terms of biological role, required for the formation of a threonylcarbamoyl group on adenosine at position 37 (t(6)A37) in tRNAs that read codons beginning with adenine. Is involved in the transfer of the threonylcarbamoyl moiety of threonylcarbamoyl-AMP (TC-AMP) to the N6 group of A37, together with TsaE and TsaB. TsaD likely plays a direct catalytic role in this reaction. The chain is tRNA N6-adenosine threonylcarbamoyltransferase from Granulibacter bethesdensis (strain ATCC BAA-1260 / CGDNIH1).